The primary structure comprises 349 residues: Isopentenyl-diphosphate delta-isomerase (349 aa).

6-7 contributes to the substrate binding site; the sequence is RK. FMN-binding positions include 62–64, Ser93, and Asn122; that span reads AMT. Gln152 is a substrate binding site. Glu153 is a Mg(2+) binding site. FMN-binding positions include Lys184, Thr214, 258-259, and 280-281; these read GG and AG.

Belongs to the IPP isomerase type 2 family. As to quaternary structure, homooctamer. Dimer of tetramers. FMN serves as cofactor. The cofactor is NADPH. Mg(2+) is required as a cofactor.

The protein resides in the cytoplasm. The catalysed reaction is isopentenyl diphosphate = dimethylallyl diphosphate. Involved in the biosynthesis of isoprenoids. Catalyzes the 1,3-allylic rearrangement of the homoallylic substrate isopentenyl (IPP) to its allylic isomer, dimethylallyl diphosphate (DMAPP). The sequence is that of Isopentenyl-diphosphate delta-isomerase from Bacillus cereus (strain ATCC 10987 / NRS 248).